The chain runs to 93 residues: DNA/RNA-binding protein Alba (93 aa).

At K11 the chain carries N6-acetyllysine.

It belongs to the histone-like Alba family. Acetylated. Acetylation at Lys-11 decreases DNA-binding affinity.

Its subcellular location is the cytoplasm. It is found in the chromosome. Functionally, binds double-stranded DNA tightly but without sequence specificity. Involved in DNA compaction. This is DNA/RNA-binding protein Alba from Pyrococcus furiosus (strain ATCC 43587 / DSM 3638 / JCM 8422 / Vc1).